A 403-amino-acid polypeptide reads, in one-letter code: Serine/threonine transporter SstT (403 aa).

9 helical membrane-spanning segments follow: residues 16 to 36 (QIVI…AIAL), 45 to 65 (FVSA…MASI), 79 to 99 (ILWL…VASM), 138 to 158 (ALLN…GVAL), 175 to 195 (GVTL…FGLV), 214 to 234 (LAVL…LIVF), 295 to 315 (MAGA…TLGI), 327 to 347 (MVAA…LLLI), and 353 to 373 (LFGI…IIGV).

The protein belongs to the dicarboxylate/amino acid:cation symporter (DAACS) (TC 2.A.23) family.

The protein localises to the cell inner membrane. The enzyme catalyses L-serine(in) + Na(+)(in) = L-serine(out) + Na(+)(out). It catalyses the reaction L-threonine(in) + Na(+)(in) = L-threonine(out) + Na(+)(out). Functionally, involved in the import of serine and threonine into the cell, with the concomitant import of sodium (symport system). The sequence is that of Serine/threonine transporter SstT from Pseudomonas putida (strain W619).